Consider the following 477-residue polypeptide: Glycogen synthase (477 aa).

K15 lines the ADP-alpha-D-glucose pocket.

The protein belongs to the glycosyltransferase 1 family. Bacterial/plant glycogen synthase subfamily.

The catalysed reaction is [(1-&gt;4)-alpha-D-glucosyl](n) + ADP-alpha-D-glucose = [(1-&gt;4)-alpha-D-glucosyl](n+1) + ADP + H(+). The protein operates within glycan biosynthesis; glycogen biosynthesis. Its function is as follows. Synthesizes alpha-1,4-glucan chains using ADP-glucose. This Shigella boydii serotype 4 (strain Sb227) protein is Glycogen synthase.